A 1099-amino-acid chain; its full sequence is Transmembrane protein 132C (1099 aa).

Positions 1-31 are cleaved as a signal peptide; sequence MRSEGAAPRRAARYGALSLVLATLLGQVTES. Topologically, residues 32-915 are extracellular; that stretch reads RGVMDNIQRF…LMQTAHGLSD (884 aa). Asn95 is a glycosylation site (N-linked (GlcNAc...) asparagine). The tract at residues 237–260 is disordered; the sequence is GDCTGGDTRKDNAIRPGKDGQEGR. Asn314 and Asn371 each carry an N-linked (GlcNAc...) asparagine glycan. The interval 801–872 is disordered; it reads DADSSQTGEK…NNVGKSGRRD (72 aa). Positions 813-849 are enriched in basic and acidic residues; the sequence is EEIKNHASDRRQKIQDLERPGQDELYHGNFPGDREEG. The helical transmembrane segment at 916–936 threads the bilayer; it reads LEIGMYALLGVFCLAILVFLI. At 937–1099 the chain is on the cytoplasmic side; the sequence is NCATFAFKYR…TYLEKFQDSV (163 aa). The segment at 1002 to 1045 is disordered; it reads NHLLLNGGSQKPTQSQVHRPPGSGGRQTREPRQEPANSPTSKMK. Polar residues predominate over residues 1008 to 1018; that stretch reads GGSQKPTQSQV.

This sequence belongs to the TMEM132 family.

The protein localises to the membrane. This is Transmembrane protein 132C (Tmem132c) from Mus musculus (Mouse).